We begin with the raw amino-acid sequence, 252 residues long: 5'-nucleotidase SurE (252 aa).

Residues Asp8, Asp9, Ser39, and Asn95 each coordinate a divalent metal cation.

It belongs to the SurE nucleotidase family. Requires a divalent metal cation as cofactor.

Its subcellular location is the cytoplasm. The catalysed reaction is a ribonucleoside 5'-phosphate + H2O = a ribonucleoside + phosphate. Nucleotidase that shows phosphatase activity on nucleoside 5'-monophosphates. The protein is 5'-nucleotidase SurE of Clostridium botulinum (strain Kyoto / Type A2).